The sequence spans 2142 residues: U5 small nuclear ribonucleoprotein 200 kDa helicase (2142 aa).

Disordered stretches follow at residues 52 to 74 (MGDR…RQKR), 211 to 234 (EESE…QDEG), and 366 to 396 (RQLD…DGGA). A compositionally biased stretch (basic and acidic residues) spans 369–391 (DTGKSEDQEEGEARGSKRGKGDA). The Helicase ATP-binding 1 domain occupies 490–673 (KAALDSDENM…FLRVKPDKGL (184 aa)). 503–510 (APTGAGKT) serves as a coordination point for ATP. Positions 615–618 (DEIH) match the DEIH box motif. Positions 684-917 (SLEQQYIGVT…GTVQHLQDAV (234 aa)) constitute a Helicase C-terminal 1 domain. The SEC63 1 domain occupies 981–1286 (VTDLGRIASH…GAETQLPVSF (306 aa)). One can recognise a Helicase ATP-binding 2 domain in the interval 1337–1511 (NAVYNSDENV…WLGCNPNATF (175 aa)). 1350–1357 (APTGSGKM) contributes to the ATP binding site. The short motif at 1453 to 1456 (DELQ) is the DELQ box element. The Helicase C-terminal 2 domain maps to 1544–1752 (PVYNAILKYS…TIENKQDAVD (209 aa)). The region spanning 1811 to 2128 (PLNLGMIAAY…GCDQEYKFSI (318 aa)) is the SEC63 2 domain.

Belongs to the helicase family. SKI2 subfamily.

Its subcellular location is the nucleus. The enzyme catalyses ATP + H2O = ADP + phosphate + H(+). Catalyzes the ATP-dependent unwinding of U4/U6 RNA duplices, an essential step in the assembly of a catalytically active spliceosome. Plays a role in pre-mRNA splicing. The sequence is that of U5 small nuclear ribonucleoprotein 200 kDa helicase from Drosophila melanogaster (Fruit fly).